The following is a 220-amino-acid chain: Grancalcin (220 aa).

4 EF-hand domains span residues 51–86 (SPADDSMWTYFTAVAGQDGEVDAEELQRCLTQSGIS), 92–127 (FSLETCRIMIAMLDRDYTGKMGFNEFKELWAALNAW), 122–157 (AALNAWKQNFMTIDQDQSGTVEHHELSQAIALMGYR), and 158–193 (LSPQTLAAIVRRYSKNGRIFFDDYVACCVKLRALTD). The Ca(2+) site is built by aspartate 105, aspartate 107, threonine 109, lysine 111, glutamate 116, aspartate 135, aspartate 137, serine 139, threonine 141, and glutamate 146.

Homodimer. Interacts with SRI and LCP1.

Its subcellular location is the cytoplasm. It localises to the cytoplasmic granule membrane. Its function is as follows. Calcium-binding protein that may play a role in the adhesion of neutrophils to fibronectin. May play a role in the formation of focal adhesions. The polypeptide is Grancalcin (Gca) (Mus musculus (Mouse)).